Here is a 526-residue protein sequence, read N- to C-terminus: Cholesterol side-chain cleavage enzyme, mitochondrial (526 aa).

The transit peptide at 1-36 (MLAKGLSLRSVLVKGCQPFLSPTWQGPVLSTGKGAG) directs the protein to the mitochondrion. Residues 30–41 (STGKGAGTSTSS) are compositionally biased toward low complexity. Residues 30–49 (STGKGAGTSTSSPRSFNEIP) form a disordered region. C458 is a binding site for heme.

This sequence belongs to the cytochrome P450 family. As to quaternary structure, interacts with FDX1/adrenodoxin. The cofactor is heme.

Its subcellular location is the mitochondrion inner membrane. It carries out the reaction 6 reduced [adrenodoxin] + cholesterol + 3 O2 + 6 H(+) = 4-methylpentanal + pregnenolone + 6 oxidized [adrenodoxin] + 4 H2O. It catalyses the reaction 2 reduced [adrenodoxin] + cholesterol + O2 + 2 H(+) = (22R)-hydroxycholesterol + 2 oxidized [adrenodoxin] + H2O. The catalysed reaction is (22R)-hydroxycholesterol + 2 reduced [adrenodoxin] + O2 + 2 H(+) = (20R,22R)-20,22-dihydroxycholesterol + 2 oxidized [adrenodoxin] + H2O. The enzyme catalyses (20R,22R)-20,22-dihydroxycholesterol + 2 reduced [adrenodoxin] + O2 + 2 H(+) = 4-methylpentanal + pregnenolone + 2 oxidized [adrenodoxin] + 2 H2O. It functions in the pathway lipid metabolism; C21-steroid hormone metabolism. The protein operates within steroid metabolism; cholesterol metabolism. Its function is as follows. A cytochrome P450 monooxygenase that catalyzes the side-chain hydroxylation and cleavage of cholesterol to pregnenolone, the precursor of most steroid hormones. Catalyzes three sequential oxidation reactions of cholesterol, namely the hydroxylation at C22 followed with the hydroxylation at C20 to yield 20R,22R-hydroxycholesterol that is further cleaved between C20 and C22 to yield the C21-steroid pregnenolone and 4-methylpentanal. Mechanistically, uses molecular oxygen inserting one oxygen atom into a substrate and reducing the second into a water molecule. Two electrons are provided by NADPH via a two-protein mitochondrial transfer system comprising flavoprotein FDXR (adrenodoxin/ferredoxin reductase) and nonheme iron-sulfur protein FDX1 or FDX2 (adrenodoxin/ferredoxin). This Mus musculus (Mouse) protein is Cholesterol side-chain cleavage enzyme, mitochondrial.